The following is a 135-amino-acid chain: Congerin-1 (135 aa).

Position 1 is an N-acetylserine (Ser-1). Residues 3-135 (GLQVKNFDFT…GDARLTLVKE (133 aa)) enclose the Galectin domain. 70-76 (WETEQRS) is an a beta-D-galactoside binding site.

As to quaternary structure, homodimer.

This protein binds beta-galactoside. Its physiological function is not yet known. This chain is Congerin-1, found in Conger myriaster (Conger eel).